A 418-amino-acid polypeptide reads, in one-letter code: Glutamyl-tRNA reductase (418 aa).

Residues 49–52 (TCNR), serine 109, 114–116 (EPQ), and glutamine 120 contribute to the substrate site. Cysteine 50 serves as the catalytic Nucleophile. Residue 189-194 (GAGETI) participates in NADP(+) binding.

The protein belongs to the glutamyl-tRNA reductase family. As to quaternary structure, homodimer.

The catalysed reaction is (S)-4-amino-5-oxopentanoate + tRNA(Glu) + NADP(+) = L-glutamyl-tRNA(Glu) + NADPH + H(+). Its pathway is porphyrin-containing compound metabolism; protoporphyrin-IX biosynthesis; 5-aminolevulinate from L-glutamyl-tRNA(Glu): step 1/2. Functionally, catalyzes the NADPH-dependent reduction of glutamyl-tRNA(Glu) to glutamate 1-semialdehyde (GSA). This chain is Glutamyl-tRNA reductase, found in Escherichia coli O6:K15:H31 (strain 536 / UPEC).